The sequence spans 471 residues: Putative multidrug resistance protein MdtD (471 aa).

The Periplasmic portion of the chain corresponds to 1–11 (MTDLPDSTRWQ). A helical membrane pass occupies residues 12 to 32 (LWIVAFGFFMQSLDTTIVNTA). Residues 33–48 (LPSMAQSLGESPLHMH) are Cytoplasmic-facing. Residues 49 to 69 (MVIVSYVLTVAVMLPASGWLA) traverse the membrane as a helical segment. The Periplasmic segment spans residues 70–76 (DKVGVRN). A helical membrane pass occupies residues 77–97 (IFFTAIVLFTLGSLFCALSGT). Residues 98-101 (LNEL) lie on the Cytoplasmic side of the membrane. Residues 102-124 (LLARALQGVGGAMMVPVGRLTVM) traverse the membrane as a helical segment. Over 125–137 (KIVPREQYMAAMT) the chain is Periplasmic. The helical transmembrane segment at 138 to 158 (FVTLPGQVGPLLGPALGGLLV) threads the bilayer. Over 159 to 164 (EYASWH) the chain is Cytoplasmic. The chain crosses the membrane as a helical span at residues 165–185 (WIFLINIPVGIIGAIATLMLM). The Periplasmic segment spans residues 186–196 (PNYTMQTRRFD). Residues 197–217 (LSGFLLLAVGMAVLTLALDGS) form a helical membrane-spanning segment. The Cytoplasmic portion of the chain corresponds to 218–224 (KGTGLSP). Residues 225 to 245 (LAIAGLVAVGVVALVLYLLHA) traverse the membrane as a helical segment. Residues 246-262 (RNNNRALFSLKLFRTRT) lie on the Periplasmic side of the membrane. Residues 263 to 283 (FSLGLAGSFAGRIGSGMLPFM) traverse the membrane as a helical segment. The Cytoplasmic portion of the chain corresponds to 284 to 285 (TP). A helical membrane pass occupies residues 286-306 (VFLQIGLGFSPFHAGLMMIPM). The Periplasmic segment spans residues 307–341 (VLGSMGMKRIVVQVVNRFGYRRVLVATTLGLSLVT). The chain crosses the membrane as a helical span at residues 342–362 (LLFMTTALLGWYYVLPFVLFL). The Cytoplasmic portion of the chain corresponds to 363 to 395 (QGMVNSTRFSSMNTLTLKDLPDNLASSGNSLLS). Residues 396 to 416 (MIMQLSMSIGVTIAGLLLGLF) traverse the membrane as a helical segment. Over 417-430 (GSQHVSVDSGTTQT) the chain is Periplasmic. A helical membrane pass occupies residues 431–451 (VFMYTWLSMAFIIALPAFIFA). Topologically, residues 452–471 (RVPNDTHQNVAISRRKRSAQ) are cytoplasmic.

The protein belongs to the major facilitator superfamily. TCR/Tet family.

It is found in the cell inner membrane. The chain is Putative multidrug resistance protein MdtD from Escherichia coli (strain SMS-3-5 / SECEC).